The chain runs to 234 residues: Large ribosomal subunit protein uL1 (234 aa).

Belongs to the universal ribosomal protein uL1 family. Part of the 50S ribosomal subunit.

Its function is as follows. Binds directly to 23S rRNA. The L1 stalk is quite mobile in the ribosome, and is involved in E site tRNA release. Protein L1 is also a translational repressor protein, it controls the translation of the L11 operon by binding to its mRNA. The chain is Large ribosomal subunit protein uL1 from Pectobacterium carotovorum subsp. carotovorum (strain PC1).